A 348-amino-acid polypeptide reads, in one-letter code: GTPase Obg (348 aa).

The 160-residue stretch at 1–160 (MHFLDQAKIF…MWVWLRLKLL (160 aa)) folds into the Obg domain. Residues 120–145 (RGGDGGRGNASYKTSTNRAPRQHGPG) form a disordered region. The 168-residue stretch at 161–328 (ADAGLVGLPN…VLDKLLEAIG (168 aa)) folds into the OBG-type G domain. GTP-binding positions include 167–174 (GLPNAGKS), 192–196 (FTTLR), 213–216 (DIPG), 280–283 (NKID), and 309–311 (SGA). Residues serine 174 and threonine 194 each coordinate Mg(2+). The interval 326–348 (AIGQPEPGPDADEEEKGGDWSPI) is disordered.

Belongs to the TRAFAC class OBG-HflX-like GTPase superfamily. OBG GTPase family. In terms of assembly, monomer. Requires Mg(2+) as cofactor.

The protein localises to the cytoplasm. Functionally, an essential GTPase which binds GTP, GDP and possibly (p)ppGpp with moderate affinity, with high nucleotide exchange rates and a fairly low GTP hydrolysis rate. Plays a role in control of the cell cycle, stress response, ribosome biogenesis and in those bacteria that undergo differentiation, in morphogenesis control. This chain is GTPase Obg, found in Sphingopyxis alaskensis (strain DSM 13593 / LMG 18877 / RB2256) (Sphingomonas alaskensis).